Reading from the N-terminus, the 232-residue chain is MDKAQQDALKKAAGIEAAKLVENGMIAGLGTGSTVKFLVDELGRRHQEEGLEFTGVTTSRRTQAQAESYGIKIVDIDDVDHIDVTIDGADEVDKNFNGIKGGGAALLWEKIVATNSNQIVWIVDESKVVDTIGKFPLPVEVIPFGAGQVIKKFEARGYKPVLRLDADGKEVRTDENNFVVDLHLERIDHPQELAEDLINTVGVVEHGLFLNMVDKVIVGDPNGPRVMTNANK.

Substrate contacts are provided by residues 31 to 34 (TGST), 87 to 90 (DGAD), and 100 to 103 (KGGG). E109 functions as the Proton acceptor in the catalytic mechanism. A substrate-binding site is contributed by K127.

The protein belongs to the ribose 5-phosphate isomerase family. In terms of assembly, homodimer.

It catalyses the reaction aldehydo-D-ribose 5-phosphate = D-ribulose 5-phosphate. It participates in carbohydrate degradation; pentose phosphate pathway; D-ribose 5-phosphate from D-ribulose 5-phosphate (non-oxidative stage): step 1/1. Its function is as follows. Catalyzes the reversible conversion of ribose-5-phosphate to ribulose 5-phosphate. This is Ribose-5-phosphate isomerase A from Bifidobacterium longum (strain NCC 2705).